A 411-amino-acid polypeptide reads, in one-letter code: Serine hydroxymethyltransferase (411 aa).

(6S)-5,6,7,8-tetrahydrofolate-binding positions include Leu-119 and 123-125 (GHL). Lys-228 carries the N6-(pyridoxal phosphate)lysine modification. 351–353 (SPF) provides a ligand contact to (6S)-5,6,7,8-tetrahydrofolate.

The protein belongs to the SHMT family. Homodimer. Pyridoxal 5'-phosphate is required as a cofactor.

The protein localises to the cytoplasm. The catalysed reaction is (6R)-5,10-methylene-5,6,7,8-tetrahydrofolate + glycine + H2O = (6S)-5,6,7,8-tetrahydrofolate + L-serine. It participates in one-carbon metabolism; tetrahydrofolate interconversion. Its pathway is amino-acid biosynthesis; glycine biosynthesis; glycine from L-serine: step 1/1. Its function is as follows. Catalyzes the reversible interconversion of serine and glycine with tetrahydrofolate (THF) serving as the one-carbon carrier. This reaction serves as the major source of one-carbon groups required for the biosynthesis of purines, thymidylate, methionine, and other important biomolecules. Also exhibits THF-independent aldolase activity toward beta-hydroxyamino acids, producing glycine and aldehydes, via a retro-aldol mechanism. The polypeptide is Serine hydroxymethyltransferase (Clostridium novyi (strain NT)).